We begin with the raw amino-acid sequence, 485 residues long: Pre-glycoprotein polyprotein GP complex (485 aa).

Glycine 2 carries the N-myristoyl glycine; by host lipid modification. The Extracellular portion of the chain corresponds to 2–17 (GQFISFMQEIPTFLQE). Residues 18-33 (ALNIALVAVSLIAIIK) form a helical membrane-spanning segment. The Cytoplasmic segment spans residues 34–58 (GVVNLYKSGLFQFFVFLALAGRSCT). Cysteine 57 contacts Zn(2+). At 59–424 (EEAFKIGLHT…QGKTPLTLVD (366 aa)) the chain is on the extracellular side. Intrachain disulfides connect cysteine 92–cysteine 226, cysteine 135–cysteine 164, cysteine 207–cysteine 213, cysteine 271–cysteine 284, cysteine 293–cysteine 302, and cysteine 356–cysteine 377. N-linked (GlcNAc...) asparagine; by host glycosylation is found at asparagine 95 and asparagine 105. N-linked (GlcNAc...) asparagine; by host glycosylation is found at asparagine 166 and asparagine 178. Residues 250–286 (LKAFFSWSLTDSSGKDTPGGYCLEEWMLVAAKMKCFG) are fusion. Residues 287-355 (NTAVAKCNLN…KIRELMSVPY (69 aa)) form an HR1 region. N-linked (GlcNAc...) asparagine; by host glycans are attached at residues asparagine 357, asparagine 365, asparagine 382, and asparagine 387. The HR2 stretch occupies residues 360-423 (KFWYVNHTLS…RQGKTPLTLV (64 aa)). A helical transmembrane segment spans residues 425–445 (ICFWSTVFFTASLFLHLVGIP). Residues 446 to 485 (THRHIRGEACPLPHRLNSLGGCRCGKYPNLKKPTVWRRGH) lie on the Cytoplasmic side of the membrane. Residues histidine 447, histidine 449, cysteine 455, histidine 459, cysteine 467, cysteine 469, and histidine 485 each coordinate Zn(2+).

Belongs to the arenaviridae GPC protein family. Interacts with glycoprotein G2. Part of the GP complex (GP-C) together with glycoprotein G1 and glycoprotein G2. The GP-complex interacts with protein Z, which interacts with ribonucleocapsid; these interactions may induce virion budding. In terms of assembly, homotrimer; disulfide-linked. In pre-fusion state, G1 homotrimers bind G2 homotrimers via ionic interactions. Part of the GP complex (GP-C) together with glycoprotein G2 and the stable signal peptide. Interacts with host TFRC. The GP-complex interacts with protein Z, which interacts with ribonucleocapsid; these interactions may induce virion budding. As to quaternary structure, homotrimer. Interacts with the stable signal peptide. In pre-fusion state, G2 homotrimers bind G1 homotrimers via ionic interactions. Part of the GP complex (GP-C) together with glycoprotein G1 and the stable signal peptide. Acidification in the endosome triggers rearrangements, which ultimately leads to a 6 helix bundle formed by the two heptad repeat domains (HR1 and HR2) in post-fusion state. The GP-complex interacts with protein Z, which interacts with ribonucleocapsid; these interactions may induce virion budding. In terms of processing, specific enzymatic cleavages in vivo yield mature proteins. GP-C polyprotein is cleaved in the endoplasmic reticulum by the host protease MBTPS1. Only cleaved glycoprotein is incorporated into virions. Post-translationally, the SSP remains stably associated with the GP complex following cleavage by signal peptidase and plays crucial roles in the trafficking of GP through the secretory pathway. Myristoylation is necessary for GP2-mediated fusion activity.

The protein localises to the virion membrane. Its subcellular location is the host endoplasmic reticulum membrane. It is found in the host Golgi apparatus membrane. It localises to the host cell membrane. Functionally, functions as a cleaved signal peptide that is retained as the third component of the GP complex (GP-C). Helps to stabilize the spike complex in its native conformation. The SSP is required for efficient glycoprotein expression, post-translational maturation cleavage of G1 and G2, glycoprotein transport to the cell surface plasma membrane, formation of infectious virus particles, and acid pH-dependent glycoprotein-mediated cell fusion. In terms of biological role, forms the virion spikes together with glycoprotein G2. The glycoprotein spike trimers are connected to the underlying matrix. Mediates virus attachment to host TFRC. This attachment induces virion internalization predominantly through clathrin-mediated endocytosis. Forms the virion spikes together with glycoprotein G1. The glycoprotein spike trimers are connected to the underlying matrix. Class I viral fusion protein that directs fusion of viral and host endosomal membranes, leading to delivery of the nucleocapsid into the cytoplasm. Membrane fusion is mediated by irreversible conformational changes induced by acidification. The protein is Pre-glycoprotein polyprotein GP complex of Junin mammarenavirus (JUNV).